The sequence spans 263 residues: Small ribosomal subunit protein uS2 (263 aa).

This sequence belongs to the universal ribosomal protein uS2 family.

This Hyphomonas neptunium (strain ATCC 15444) protein is Small ribosomal subunit protein uS2.